A 201-amino-acid polypeptide reads, in one-letter code: Fimbrial protein FimX (201 aa).

An N-terminal signal peptide occupies residues 1–21 (MQAKTFLLGAALAGVALAAHA). Residues Cys37 and Cys79 are joined by a disulfide bond.

It belongs to the fimbrial protein family.

The protein resides in the fimbrium. Its function is as follows. Bordetella pertussis is the causative agent of whooping cough. An essential step in the disease process is the attachment of the bacteria to the ciliated epithelium of the respiratory tract, enabling the organism to resist normal host-clearance mechanisms. It is unclear which bacterial cell surface component are responsible for adherence but the fimbriae of B.pertussis are prime candidates for being involved in this process. The polypeptide is Fimbrial protein FimX (fimX) (Bordetella pertussis (strain Tohama I / ATCC BAA-589 / NCTC 13251)).